A 76-amino-acid polypeptide reads, in one-letter code: Small proline-rich protein 2G (76 aa).

A run of 3 repeats spans residues 21-29 (PKCPEPCPL), 30-38 (PKCPEPCPP), and 39-47 (PKCPEPCPE). A 3 X 9 AA approximate tandem repeats region spans residues 21 to 47 (PKCPEPCPLPKCPEPCPPPKCPEPCPE). Residues 55–76 (QQKCPPVQTPPPCQQKCPPKSK) are disordered.

Belongs to the cornifin (SPRR) family. As to expression, expressed in uterus.

Its subcellular location is the cytoplasm. Cross-linked envelope protein of keratinocytes. It is a keratinocyte protein that first appears in the cell cytosol, but ultimately becomes cross-linked to membrane proteins by transglutaminase. All that results in the formation of an insoluble envelope beneath the plasma membrane. This is Small proline-rich protein 2G (Sprr2g) from Mus musculus (Mouse).